A 261-amino-acid polypeptide reads, in one-letter code: Fructoselysine 6-kinase (261 aa).

It belongs to the carbohydrate kinase PfkB family. Monomer.

It catalyses the reaction N(6)-(D-fructosyl)-L-lysine + ATP = N(6)-(6-phospho-D-fructosyl)-L-lysine + ADP + H(+). Its pathway is carbohydrate metabolism; fructoselysine degradation; D-glucose 6-phosphate and lysine from fructoselysine: step 1/2. Catalyzes the ATP-dependent phosphorylation of fructoselysine to fructoselysine 6-phosphate. May function in a fructoselysine degradation pathway that allows S.flexneri to grow on fructoselysine or psicoselysine. This Shigella flexneri protein is Fructoselysine 6-kinase (frlD).